The chain runs to 427 residues: Enolase (427 aa).

Residue glutamine 162 coordinates (2R)-2-phosphoglycerate. Glutamate 204 serves as the catalytic Proton donor. Mg(2+) contacts are provided by aspartate 241, glutamate 282, and aspartate 309. The (2R)-2-phosphoglycerate site is built by lysine 334, arginine 363, serine 364, and lysine 385. The active-site Proton acceptor is the lysine 334.

The protein belongs to the enolase family. The cofactor is Mg(2+).

Its subcellular location is the cytoplasm. The protein resides in the secreted. The protein localises to the cell surface. The catalysed reaction is (2R)-2-phosphoglycerate = phosphoenolpyruvate + H2O. It functions in the pathway carbohydrate degradation; glycolysis; pyruvate from D-glyceraldehyde 3-phosphate: step 4/5. Catalyzes the reversible conversion of 2-phosphoglycerate (2-PG) into phosphoenolpyruvate (PEP). It is essential for the degradation of carbohydrates via glycolysis. The sequence is that of Enolase from Parafrankia sp. (strain EAN1pec).